The sequence spans 468 residues: UDP-N-acetylmuramate--L-alanine ligase (468 aa).

An ATP-binding site is contributed by 117–123 (GTHGKTT).

Belongs to the MurCDEF family.

The protein localises to the cytoplasm. The enzyme catalyses UDP-N-acetyl-alpha-D-muramate + L-alanine + ATP = UDP-N-acetyl-alpha-D-muramoyl-L-alanine + ADP + phosphate + H(+). It participates in cell wall biogenesis; peptidoglycan biosynthesis. In terms of biological role, cell wall formation. The protein is UDP-N-acetylmuramate--L-alanine ligase of Maricaulis maris (strain MCS10) (Caulobacter maris).